A 145-amino-acid polypeptide reads, in one-letter code: UPF0310 protein PH1033 (145 aa).

Belongs to the UPF0310 family.

This is UPF0310 protein PH1033 from Pyrococcus horikoshii (strain ATCC 700860 / DSM 12428 / JCM 9974 / NBRC 100139 / OT-3).